The primary structure comprises 288 residues: MVNIEIDEGSGFCFGVTTAIRKAEEELAKGNTLYCLGDIVHNGQECERLKKMGLITINHEEFAQLHDAKVLLRAHGEPPETYAIARTNNIEIIDATCPVVLRLQKRIKQEYDNVPASQDTQIVIYGKNGHAEVLGLVGQTHGKAIVIETPAEAAHLDFTKDIRLYSQTTKSLEEFWQIIEYIKEHISPDATFEYYDTICRQVANRMPNIRKFAAAHDLIFFVCGRKSSNGKILYQECKKINPNSYLIDQPEEIDRNLLEDVRSIGICGATSTPKWLMEECKKAILNEK.

Residue Cys-13 coordinates [4Fe-4S] cluster. (2E)-4-hydroxy-3-methylbut-2-enyl diphosphate is bound by residues His-41 and His-75. Dimethylallyl diphosphate is bound by residues His-41 and His-75. Isopentenyl diphosphate-binding residues include His-41 and His-75. [4Fe-4S] cluster is bound at residue Cys-97. His-130 contacts (2E)-4-hydroxy-3-methylbut-2-enyl diphosphate. His-130 is a dimethylallyl diphosphate binding site. Residue His-130 participates in isopentenyl diphosphate binding. Glu-132 acts as the Proton donor in catalysis. A (2E)-4-hydroxy-3-methylbut-2-enyl diphosphate-binding site is contributed by Thr-168. [4Fe-4S] cluster is bound at residue Cys-199. Residues Ser-227, Ser-228, Asn-229, and Ser-271 each coordinate (2E)-4-hydroxy-3-methylbut-2-enyl diphosphate. Residues Ser-227, Ser-228, Asn-229, and Ser-271 each contribute to the dimethylallyl diphosphate site. Residues Ser-227, Ser-228, Asn-229, and Ser-271 each contribute to the isopentenyl diphosphate site.

The protein belongs to the IspH family. Requires [4Fe-4S] cluster as cofactor.

The catalysed reaction is isopentenyl diphosphate + 2 oxidized [2Fe-2S]-[ferredoxin] + H2O = (2E)-4-hydroxy-3-methylbut-2-enyl diphosphate + 2 reduced [2Fe-2S]-[ferredoxin] + 2 H(+). It carries out the reaction dimethylallyl diphosphate + 2 oxidized [2Fe-2S]-[ferredoxin] + H2O = (2E)-4-hydroxy-3-methylbut-2-enyl diphosphate + 2 reduced [2Fe-2S]-[ferredoxin] + 2 H(+). Its pathway is isoprenoid biosynthesis; dimethylallyl diphosphate biosynthesis; dimethylallyl diphosphate from (2E)-4-hydroxy-3-methylbutenyl diphosphate: step 1/1. The protein operates within isoprenoid biosynthesis; isopentenyl diphosphate biosynthesis via DXP pathway; isopentenyl diphosphate from 1-deoxy-D-xylulose 5-phosphate: step 6/6. Its function is as follows. Catalyzes the conversion of 1-hydroxy-2-methyl-2-(E)-butenyl 4-diphosphate (HMBPP) into a mixture of isopentenyl diphosphate (IPP) and dimethylallyl diphosphate (DMAPP). Acts in the terminal step of the DOXP/MEP pathway for isoprenoid precursor biosynthesis. The polypeptide is 4-hydroxy-3-methylbut-2-enyl diphosphate reductase (Phocaeicola vulgatus (strain ATCC 8482 / DSM 1447 / JCM 5826 / CCUG 4940 / NBRC 14291 / NCTC 11154) (Bacteroides vulgatus)).